A 126-amino-acid polypeptide reads, in one-letter code: Holo-[acyl-carrier-protein] synthase (126 aa).

Positions 9 and 58 each coordinate Mg(2+).

The protein belongs to the P-Pant transferase superfamily. AcpS family. It depends on Mg(2+) as a cofactor.

It localises to the cytoplasm. It carries out the reaction apo-[ACP] + CoA = holo-[ACP] + adenosine 3',5'-bisphosphate + H(+). In terms of biological role, transfers the 4'-phosphopantetheine moiety from coenzyme A to a Ser of acyl-carrier-protein. This chain is Holo-[acyl-carrier-protein] synthase, found in Buchnera aphidicola subsp. Acyrthosiphon pisum (strain APS) (Acyrthosiphon pisum symbiotic bacterium).